We begin with the raw amino-acid sequence, 319 residues long: ATP-dependent 6-phosphofructokinase (319 aa).

G11 provides a ligand contact to ATP. 21-25 (RAVVR) is a binding site for ADP. ATP contacts are provided by residues 72-73 (RC) and 102-105 (GDGS). D103 provides a ligand contact to Mg(2+). 125–127 (TID) contributes to the substrate binding site. D127 functions as the Proton acceptor in the catalytic mechanism. Residue R154 coordinates ADP. Substrate is bound by residues R162 and 169–171 (MGR). ADP is bound by residues 185–187 (GAE), R211, and 213–215 (KKH). Substrate contacts are provided by residues E222, R243, and 249–252 (HIQR).

Belongs to the phosphofructokinase type A (PFKA) family. ATP-dependent PFK group I subfamily. Prokaryotic clade 'B1' sub-subfamily. Homotetramer. Component of a possible RNA degradosome complex composed of rny, rnjA, rnjB, pnp, pfkA and eno (although rnjA and rnjB's presence is unclear). Specifically interacts with RNase Y (rny, PubMed:21803996) and enolase (eno, PubMed:22198292). Interacts with BrxC. It depends on Mg(2+) as a cofactor.

Its subcellular location is the cytoplasm. It catalyses the reaction beta-D-fructose 6-phosphate + ATP = beta-D-fructose 1,6-bisphosphate + ADP + H(+). The protein operates within carbohydrate degradation; glycolysis; D-glyceraldehyde 3-phosphate and glycerone phosphate from D-glucose: step 3/4. Its activity is regulated as follows. Allosterically activated by ADP and other diphosphonucleosides, and allosterically inhibited by phosphoenolpyruvate. Functionally, catalyzes the phosphorylation of D-fructose 6-phosphate to fructose 1,6-bisphosphate by ATP, the first committing step of glycolysis. In Bacillus subtilis (strain 168), this protein is ATP-dependent 6-phosphofructokinase.